The sequence spans 434 residues: Histidinol dehydrogenase (434 aa).

Residues Y130, Q188, and N211 each coordinate NAD(+). Residues S237, Q259, and H262 each contribute to the substrate site. Positions 259 and 262 each coordinate Zn(2+). Active-site proton acceptor residues include E326 and H327. 4 residues coordinate substrate: H327, D360, E414, and H419. D360 lines the Zn(2+) pocket. Position 419 (H419) interacts with Zn(2+).

Belongs to the histidinol dehydrogenase family. As to quaternary structure, homodimer. Zn(2+) serves as cofactor.

It catalyses the reaction L-histidinol + 2 NAD(+) + H2O = L-histidine + 2 NADH + 3 H(+). It functions in the pathway amino-acid biosynthesis; L-histidine biosynthesis; L-histidine from 5-phospho-alpha-D-ribose 1-diphosphate: step 9/9. In terms of biological role, catalyzes the sequential NAD-dependent oxidations of L-histidinol to L-histidinaldehyde and then to L-histidine. This is Histidinol dehydrogenase from Salmonella typhi.